Consider the following 101-residue polypeptide: Large ribosomal subunit protein bL28 (101 aa).

It belongs to the bacterial ribosomal protein bL28 family.

This is Large ribosomal subunit protein bL28 from Rhodopseudomonas palustris (strain BisB18).